Consider the following 263-residue polypeptide: Proliferating cell nuclear antigen (263 aa).

Residues arginine 61–arginine 80 mediate DNA binding.

The protein belongs to the PCNA family. As to quaternary structure, homotrimer. Interacts with FEN1A. Interacts with POLL. Interacts with RAD/GEN1. Interacts with DJA7 and DJA8. Expressed in proliferating tissues. Expressed in roots and root apex. Expressed at low levels in young leaves. Not detected in mature leaves. Highly expressed in shoot apical meristem (SAM). Expressed in flag leaves and panicles.

The protein localises to the nucleus. Its function is as follows. This protein is an auxiliary protein of DNA polymerase delta and is involved in the control of eukaryotic DNA replication by increasing the polymerase's processibility during elongation of the leading strand. The polypeptide is Proliferating cell nuclear antigen (Oryza sativa subsp. japonica (Rice)).